Reading from the N-terminus, the 313-residue chain is D-alanine--D-alanine ligase (313 aa).

The ATP-grasp domain maps to 108 to 308; it reads KLVWQQTGVP…YSELVVKVLS (201 aa). 138–193 lines the ATP pocket; that stretch reads VAKLGLPLFVKPASEGSSVAVLKVKTADALPAALAEAATHDKIVIVEKSIEGGGEY. Mg(2+) contacts are provided by Asp262, Glu275, and Asn277.

The protein belongs to the D-alanine--D-alanine ligase family. Requires Mg(2+) as cofactor. Mn(2+) serves as cofactor.

It is found in the cytoplasm. The enzyme catalyses 2 D-alanine + ATP = D-alanyl-D-alanine + ADP + phosphate + H(+). It participates in cell wall biogenesis; peptidoglycan biosynthesis. Cell wall formation. In Burkholderia orbicola (strain MC0-3), this protein is D-alanine--D-alanine ligase.